The chain runs to 243 residues: MAEVLLGVNIDHIATVRNARGTHYPDPVQAAFVAEQAGADGITIHLREDRRHITDRDVELLKKTIQTRMNLEMAVTDEMVDIACRIKPEFCCLVPEKRQEVTTEGGLDVIGQKDKVAAAVKRLSDAGILVSLFIDAEHRQIDAANEVGAPFIEIHTGAYADAKNEVEQEKEFHRIKAAATYAASKGLTVNAGHGLTYHNVQRIAALPEIYELNIGHAIIGRAVFSGLTAAVADMKTQMRKARR.

N9 is a 3-amino-2-oxopropyl phosphate binding site. A 1-deoxy-D-xylulose 5-phosphate-binding site is contributed by 11 to 12 (DH). R20 provides a ligand contact to 3-amino-2-oxopropyl phosphate. The Proton acceptor role is filled by H45. Positions 47 and 52 each coordinate 1-deoxy-D-xylulose 5-phosphate. E72 (proton acceptor) is an active-site residue. T102 is a 1-deoxy-D-xylulose 5-phosphate binding site. H193 acts as the Proton donor in catalysis. 3-amino-2-oxopropyl phosphate-binding positions include G194 and 215–216 (GH).

Belongs to the PNP synthase family. Homooctamer; tetramer of dimers.

It localises to the cytoplasm. The enzyme catalyses 3-amino-2-oxopropyl phosphate + 1-deoxy-D-xylulose 5-phosphate = pyridoxine 5'-phosphate + phosphate + 2 H2O + H(+). The protein operates within cofactor biosynthesis; pyridoxine 5'-phosphate biosynthesis; pyridoxine 5'-phosphate from D-erythrose 4-phosphate: step 5/5. In terms of biological role, catalyzes the complicated ring closure reaction between the two acyclic compounds 1-deoxy-D-xylulose-5-phosphate (DXP) and 3-amino-2-oxopropyl phosphate (1-amino-acetone-3-phosphate or AAP) to form pyridoxine 5'-phosphate (PNP) and inorganic phosphate. The sequence is that of Pyridoxine 5'-phosphate synthase from Photorhabdus laumondii subsp. laumondii (strain DSM 15139 / CIP 105565 / TT01) (Photorhabdus luminescens subsp. laumondii).